A 232-amino-acid polypeptide reads, in one-letter code: Cobalt transport protein CbiM (232 aa).

6 helical membrane-spanning segments follow: residues 6-26, 43-63, 84-104, 107-127, 135-155, and 181-201; these read GFLP…FVVH, LLLG…LPSV, IMAV…AHGG, TLGA…YGVY, VPLM…TYCV, and IFAV…VIVM.

The protein belongs to the CbiM family. As to quaternary structure, forms an energy-coupling factor (ECF) transporter complex composed of an ATP-binding protein (A component, CbiO), a transmembrane protein (T component, CbiQ) and 2 possible substrate-capture proteins (S components, CbiM and CbiN) of unknown stoichimetry.

The protein localises to the cell membrane. It participates in cofactor biosynthesis; adenosylcobalamin biosynthesis. In terms of biological role, part of the energy-coupling factor (ECF) transporter complex CbiMNOQ involved in cobalt import. In Streptomyces coelicolor (strain ATCC BAA-471 / A3(2) / M145), this protein is Cobalt transport protein CbiM.